Reading from the N-terminus, the 123-residue chain is Large ribosomal subunit protein uL14 (123 aa).

It belongs to the universal ribosomal protein uL14 family. In terms of assembly, part of the 50S ribosomal subunit. Forms a cluster with proteins L3 and L19. In the 70S ribosome, L14 and L19 interact and together make contacts with the 16S rRNA in bridges B5 and B8.

Binds to 23S rRNA. Forms part of two intersubunit bridges in the 70S ribosome. This Vibrio vulnificus (strain CMCP6) protein is Large ribosomal subunit protein uL14.